A 743-amino-acid chain; its full sequence is Cytosolic neutral trehalase (743 aa).

5 residues coordinate Ca(2+): D95, D97, N99, Q101, and D106. Residues R285, 292-293 (WD), N329, 338-340 (RSQ), E405, R454, and G457 each bind substrate. Residues D459 and E664 each act as proton donor/acceptor in the active site.

Belongs to the glycosyl hydrolase 37 family. The cofactor is Ca(2+).

Its subcellular location is the cytoplasm. The catalysed reaction is alpha,alpha-trehalose + H2O = alpha-D-glucose + beta-D-glucose. Its pathway is carbohydrate degradation. In terms of biological role, hydrolyzes intracellular trehalose to glucose. This is Cytosolic neutral trehalase from Beauveria bassiana (strain ARSEF 2860) (White muscardine disease fungus).